The sequence spans 159 residues: Transcription elongation factor GreA (159 aa).

This sequence belongs to the GreA/GreB family.

In terms of biological role, necessary for efficient RNA polymerase transcription elongation past template-encoded arresting sites. The arresting sites in DNA have the property of trapping a certain fraction of elongating RNA polymerases that pass through, resulting in locked ternary complexes. Cleavage of the nascent transcript by cleavage factors such as GreA or GreB allows the resumption of elongation from the new 3'terminus. GreA releases sequences of 2 to 3 nucleotides. This Orientia tsutsugamushi (strain Ikeda) (Rickettsia tsutsugamushi) protein is Transcription elongation factor GreA.